Reading from the N-terminus, the 753-residue chain is Probable phosphoenolpyruvate synthase (753 aa).

The active-site Tele-phosphohistidine intermediate is the histidine 398. Residues arginine 488, arginine 535, glutamate 631, glycine 653, threonine 654, asparagine 655, and aspartate 656 each coordinate substrate. Glutamate 631 contributes to the Mg(2+) binding site. Aspartate 656 serves as a coordination point for Mg(2+). Cysteine 703 functions as the Proton donor in the catalytic mechanism.

The protein belongs to the PEP-utilizing enzyme family. It depends on Mg(2+) as a cofactor.

The enzyme catalyses pyruvate + ATP + H2O = phosphoenolpyruvate + AMP + phosphate + 2 H(+). It participates in carbohydrate biosynthesis; gluconeogenesis. In terms of biological role, catalyzes the phosphorylation of pyruvate to phosphoenolpyruvate. This chain is Probable phosphoenolpyruvate synthase (ppsA), found in Archaeoglobus fulgidus (strain ATCC 49558 / DSM 4304 / JCM 9628 / NBRC 100126 / VC-16).